A 149-amino-acid chain; its full sequence is 3-dehydroquinate dehydratase (149 aa).

Y26 (proton acceptor) is an active-site residue. Substrate-binding residues include N78, H84, and D91. Residue H104 is the Proton donor of the active site. Residues 105–106 and R115 contribute to the substrate site; that span reads LS.

It belongs to the type-II 3-dehydroquinase family. As to quaternary structure, homododecamer.

The catalysed reaction is 3-dehydroquinate = 3-dehydroshikimate + H2O. It functions in the pathway metabolic intermediate biosynthesis; chorismate biosynthesis; chorismate from D-erythrose 4-phosphate and phosphoenolpyruvate: step 3/7. Its function is as follows. Catalyzes a trans-dehydration via an enolate intermediate. This chain is 3-dehydroquinate dehydratase, found in Polynucleobacter necessarius subsp. necessarius (strain STIR1).